We begin with the raw amino-acid sequence, 331 residues long: Probable cytosolic iron-sulfur protein assembly protein Ciao1 (331 aa).

7 WD repeats span residues 12–51 (GHKGRIWGVAWHPKGNSFASCGEDKAIRIWSQSGNTWTTK), 57–96 (GHKRTIREVRWSPCGEYLASASFDATTAIWSKHECNATLE), 97–136 (GHENEVKSVSWSQSGGLLATCSRDKSVWIWEVAGDDEFEC), 142–181 (AHTQDVKRVVWHPSKEILASASYDNTIKMYAESALDSDWD), 188–227 (SHTSTVWSIDFEADGERLVSCSDDTTLKIWRAYHPGNEAG), 246–285 (QHSRAVYDVSWCKLTGLIASACGDDGIRIFKESSDSKRDE), and 297–331 (AHEQDVNAVEWNPVTAGQLISCSDDGTIKIWKLQE).

This sequence belongs to the WD repeat CIA1 family.

In terms of biological role, essential component of the cytosolic iron-sulfur (Fe/S) protein assembly machinery. Required for the maturation of extramitochondrial Fe/S proteins. This is Probable cytosolic iron-sulfur protein assembly protein Ciao1 from Drosophila grimshawi (Hawaiian fruit fly).